A 188-amino-acid polypeptide reads, in one-letter code: CMT1A duplicated region transcript 15 protein (188 aa).

In terms of tissue distribution, expressed in fetal heart, kidney, liver, lung and spleen.

This is CMT1A duplicated region transcript 15 protein (CDRT15) from Homo sapiens (Human).